A 340-amino-acid polypeptide reads, in one-letter code: Phosphoribosylformylglycinamidine cyclo-ligase (340 aa).

It belongs to the AIR synthase family.

Its subcellular location is the cytoplasm. It carries out the reaction 2-formamido-N(1)-(5-O-phospho-beta-D-ribosyl)acetamidine + ATP = 5-amino-1-(5-phospho-beta-D-ribosyl)imidazole + ADP + phosphate + H(+). It functions in the pathway purine metabolism; IMP biosynthesis via de novo pathway; 5-amino-1-(5-phospho-D-ribosyl)imidazole from N(2)-formyl-N(1)-(5-phospho-D-ribosyl)glycinamide: step 2/2. This Streptococcus pneumoniae (strain P1031) protein is Phosphoribosylformylglycinamidine cyclo-ligase.